The primary structure comprises 234 residues: t-SNARE protein aex-4 (234 aa).

T-SNARE coiled-coil homology domains follow at residues 37–99 and 170–232; these read AKLN…ITAM and DAIE…VKKL.

Belongs to the SNAP-25 family. As to expression, expressed in intestinal cells.

It localises to the cell membrane. In terms of biological role, t-SNARE protein which regulates the secretion of aex-5 from intestinal cells. Involved in the defecation motor program, which is a coordinated series of three muscle contractions that occurs every 45 seconds. The polypeptide is t-SNARE protein aex-4 (Caenorhabditis elegans).